We begin with the raw amino-acid sequence, 237 residues long: Small ribosomal subunit protein eS4 (237 aa).

The region spanning 37–100 is the S4 RNA-binding domain; it reads IPLAVLLRDV…NEYYRIIPDP (64 aa).

This sequence belongs to the eukaryotic ribosomal protein eS4 family.

This is Small ribosomal subunit protein eS4 from Caldivirga maquilingensis (strain ATCC 700844 / DSM 13496 / JCM 10307 / IC-167).